We begin with the raw amino-acid sequence, 909 residues long: Glucan endo-1,3-beta-D-glucosidase ARB_01444 (909 aa).

A signal peptide spans methionine 1 to alanine 23. The interval lysine 136–threonine 187 is disordered. Residues tyrosine 155–glutamine 180 show a composition bias toward polar residues. Residues asparagine 159, asparagine 239, and asparagine 259 are each glycosylated (N-linked (GlcNAc...) asparagine). The interval glutamine 191–proline 430 is beta-sandwich subdomain. Residues glutamine 191–leucine 909 enclose the GH81 domain. The tract at residues serine 431–asparagine 524 is alpha/beta subdomain. The tract at residues serine 539–leucine 909 is (alpha/beta)6 barrel subdomain. Residue aspartate 654 is part of the active site. Residues histidine 658, aspartate 727, glutamate 729, and glutamate 733 each contribute to the (1,3-beta-D-glucosyl)n site. Catalysis depends on residues glutamate 729 and glutamate 733. A may provide specificity for triple-helical beta-glucan region spans residues lysine 798–aspartate 800. Residue tyrosine 811 participates in (1,3-beta-D-glucosyl)n binding.

The protein belongs to the glycosyl hydrolase 81 family.

The protein resides in the secreted. Its subcellular location is the cell wall. The catalysed reaction is Hydrolysis of (1-&gt;3)-beta-D-glucosidic linkages in (1-&gt;3)-beta-D-glucans.. In terms of biological role, cleaves internal linkages in 1,3-beta-glucan. Probably involved in cell separation after cytokinesis. This chain is Glucan endo-1,3-beta-D-glucosidase ARB_01444, found in Arthroderma benhamiae (strain ATCC MYA-4681 / CBS 112371) (Trichophyton mentagrophytes).